The chain runs to 1728 residues: Protein NETWORKED 1A (1728 aa).

One can recognise an NAB domain in the interval 13-92 (YSWWWDSHIP…ERYDHATVEL (80 aa)). Coiled-coil stretches lie at residues 155 to 446 (LGNS…LEIE), 476 to 827 (MLRD…QVEI), 857 to 885 (FSEKLIAELESENLEQQMEAEFLVHEIDN), 954 to 1016 (QFQS…AELQ), 1090 to 1323 (EQAE…KETV), 1403 to 1431 (LLQDMKTRIKTIKQAVAEEKKRRGKLRRR), and 1576 to 1684 (RRLA…TKSK). Positions 1419-1441 (AEEKKRRGKLRRRSSSHRSKDRK) are disordered. The span at 1424-1439 (RRGKLRRRSSSHRSKD) shows a compositional bias: basic residues.

It belongs to the NET family. In terms of assembly, interacts with F-actin. In terms of tissue distribution, expressed in root meristems and at very low levels throughout mature vasculature.

It localises to the cytoplasm. The protein resides in the cytoskeleton. The protein localises to the cell membrane. It is found in the cell junction. Its subcellular location is the plasmodesma. In terms of biological role, plant-specific actin binding protein. Associates with F-actin at the plasma membrane and plasmodesmata. May be part of a membrane-cytoskeletal adapter complex. This Arabidopsis thaliana (Mouse-ear cress) protein is Protein NETWORKED 1A.